Reading from the N-terminus, the 426-residue chain is GATA type zinc finger protein asd-4 (426 aa).

The GATA-type zinc-finger motif lies at 16 to 40 (CQNCATSTTPLWRRDEMGQVLCNAC). 2 disordered regions span residues 70 to 143 (RPDL…NPHI) and 159 to 178 (PGFG…MNGE). Low complexity predominate over residues 104 to 113 (PNNPAAAARR). Polar residues predominate over residues 128–138 (SPVSRTGTPNV). Positions 182-292 (QTHEQLLAAN…QDNGRHKKIR (111 aa)) form a coiled coil. Positions 306–318 (VEPQQPEQQQPAP) are enriched in low complexity. The segment at 306–426 (VEPQQPEQQQ…PVEEAPKAES (121 aa)) is disordered. The segment covering 335–353 (APAPAPEAAPEQAPAPAPE) has biased composition (pro residues). Over residues 354–419 (PVQEQAQEPE…SEPPTTAPVE (66 aa)) the composition is skewed to low complexity.

In terms of assembly, homotetramer.

The protein resides in the nucleus. Its function is as follows. Transcriptional regulator that functions in sexual development; disruption of asd-4 gene results in agenesis of ascus and ascospore with macroscopically normal fruiting body formation. The GATA-type zinc finger domain binds to DNA sequences from its own promoter region. This chain is GATA type zinc finger protein asd-4 (asd-4), found in Neurospora crassa (strain ATCC 24698 / 74-OR23-1A / CBS 708.71 / DSM 1257 / FGSC 987).